The primary structure comprises 70 residues: uncharacterized protein (70 aa).

A disordered region spans residues 40–70; the sequence is LHQQRTAHKVTSPPSQRPQNSETKSDSQNRS. The segment covering 51–61 has biased composition (polar residues); sequence SPPSQRPQNSE.

This is an uncharacterized protein from Bdellovibrio phage phiMH2K (Bacteriophage phiMH2K).